A 90-amino-acid chain; its full sequence is Probable Fe(2+)-trafficking protein (90 aa).

It belongs to the Fe(2+)-trafficking protein family.

Could be a mediator in iron transactions between iron acquisition and iron-requiring processes, such as synthesis and/or repair of Fe-S clusters in biosynthetic enzymes. The sequence is that of Probable Fe(2+)-trafficking protein from Herminiimonas arsenicoxydans.